The primary structure comprises 165 residues: Phosphopantetheine adenylyltransferase (165 aa).

Ser-9 is a substrate binding site. ATP-binding positions include 9 to 10 (SF) and His-17. Lys-41, Leu-73, and Lys-87 together coordinate substrate. Residues 88–90 (GLR), Glu-98, and 122–128 (YSFLSSS) each bind ATP.

This sequence belongs to the bacterial CoaD family. Homohexamer. Mg(2+) serves as cofactor.

It localises to the cytoplasm. It catalyses the reaction (R)-4'-phosphopantetheine + ATP + H(+) = 3'-dephospho-CoA + diphosphate. It participates in cofactor biosynthesis; coenzyme A biosynthesis; CoA from (R)-pantothenate: step 4/5. In terms of biological role, reversibly transfers an adenylyl group from ATP to 4'-phosphopantetheine, yielding dephospho-CoA (dPCoA) and pyrophosphate. The polypeptide is Phosphopantetheine adenylyltransferase (Acidothermus cellulolyticus (strain ATCC 43068 / DSM 8971 / 11B)).